The following is a 103-amino-acid chain: DNA-directed RNA polymerase subunit omega (103 aa).

The disordered stretch occupies residues 52–103 (EIESGNVTIHPDPEGKREAVRRRIEEEKRRKEEEEKKIKEQIAKEKEDGEKI). Residues 62-103 (PDPEGKREAVRRRIEEEKRRKEEEEKKIKEQIAKEKEDGEKI) show a composition bias toward basic and acidic residues.

Belongs to the RNA polymerase subunit omega family. The RNAP catalytic core consists of 2 alpha, 1 beta, 1 beta' and 1 omega subunit. When a sigma factor is associated with the core the holoenzyme is formed, which can initiate transcription.

The catalysed reaction is RNA(n) + a ribonucleoside 5'-triphosphate = RNA(n+1) + diphosphate. Its function is as follows. Promotes RNA polymerase assembly. Latches the N- and C-terminal regions of the beta' subunit thereby facilitating its interaction with the beta and alpha subunits. The protein is DNA-directed RNA polymerase subunit omega of Streptococcus pneumoniae serotype 19F (strain G54).